The primary structure comprises 632 residues: Extracellular metalloproteinase 2 (632 aa).

Residues 1 to 19 form the signal peptide; sequence MHGLLLAGLAAALPLGVAG. Positions 20–244 are excised as a propeptide; that stretch reads LPARQQSGLS…VHNVVDYVAS (225 aa). Asn270 is a glycosylation site (N-linked (GlcNAc...) asparagine). His429 lines the Zn(2+) pocket. Glu430 is a catalytic residue. His433 is a Zn(2+) binding site.

The protein belongs to the peptidase M36 family. Zn(2+) is required as a cofactor.

The protein localises to the secreted. Its function is as follows. Secreted metalloproteinase that allows assimilation of proteinaceous substrates and probably acts as a virulence factor. The sequence is that of Extracellular metalloproteinase 2 (MEP2) from Arthroderma gypseum (strain ATCC MYA-4604 / CBS 118893) (Microsporum gypseum).